A 117-amino-acid polypeptide reads, in one-letter code: Large ribosomal subunit protein bL20 (117 aa).

The protein belongs to the bacterial ribosomal protein bL20 family.

Its function is as follows. Binds directly to 23S ribosomal RNA and is necessary for the in vitro assembly process of the 50S ribosomal subunit. It is not involved in the protein synthesizing functions of that subunit. In Limosilactobacillus fermentum (strain NBRC 3956 / LMG 18251) (Lactobacillus fermentum), this protein is Large ribosomal subunit protein bL20.